The primary structure comprises 237 residues: Orotidine 5'-phosphate decarboxylase (237 aa).

Substrate is bound by residues Asp-17, Lys-39, 66–75 (DLKLHDIGNT), Thr-121, Arg-182, Gln-191, Gly-211, and Arg-212. Residue Lys-68 is the Proton donor of the active site.

Belongs to the OMP decarboxylase family. Type 1 subfamily. Homodimer.

It carries out the reaction orotidine 5'-phosphate + H(+) = UMP + CO2. It participates in pyrimidine metabolism; UMP biosynthesis via de novo pathway; UMP from orotate: step 2/2. Functionally, catalyzes the decarboxylation of orotidine 5'-monophosphate (OMP) to uridine 5'-monophosphate (UMP). This Rhodopseudomonas palustris (strain TIE-1) protein is Orotidine 5'-phosphate decarboxylase.